The primary structure comprises 87 residues: U3-theraphotoxin-Hhn1a 6 (87 aa).

Residues 1 to 24 (MVNMKASMFLTFAGLVLLFVVCYA) form the signal peptide. Positions 25–52 (SESEKKEFPKEMLSSIFAVDNDFKQEER) are excised as a propeptide. Disulfide bonds link Cys54–Cys67, Cys61–Cys72, and Cys66–Cys79.

Belongs to the neurotoxin 10 (Hwtx-1) family. 51 (Hntx-8) subfamily. Hntx-8 sub-subfamily. As to expression, expressed by the venom gland.

The protein resides in the secreted. Functionally, ion channel inhibitor. This is U3-theraphotoxin-Hhn1a 6 from Cyriopagopus hainanus (Chinese bird spider).